The following is a 62-amino-acid chain: Beta-defensin 10 (62 aa).

The signal sequence occupies residues 1–22; sequence MRLHHLLLLLLLVVLSSGSGFT. Position 23 is a pyrrolidone carboxylic acid (Q23). 3 disulfide bridges follow: C31–C60, C38–C53, and C43–C61.

Belongs to the beta-defensin family. Neutrophilic granules.

The protein localises to the secreted. Functionally, has bactericidal activity. Active against E.coli ML35 and S.aureus 502A. This chain is Beta-defensin 10 (DEFB10), found in Bos taurus (Bovine).